The sequence spans 299 residues: tRNA dimethylallyltransferase (299 aa).

ATP is bound at residue 5–12; it reads GPTASGKT. 7-12 contributes to the substrate binding site; that stretch reads TASGKT. Interaction with substrate tRNA stretches follow at residues 30–33, 154–158, and 235–240; these read DSAL, QRLSR, and RCVGYR.

It belongs to the IPP transferase family. As to quaternary structure, monomer. It depends on Mg(2+) as a cofactor.

It catalyses the reaction adenosine(37) in tRNA + dimethylallyl diphosphate = N(6)-dimethylallyladenosine(37) in tRNA + diphosphate. Catalyzes the transfer of a dimethylallyl group onto the adenine at position 37 in tRNAs that read codons beginning with uridine, leading to the formation of N6-(dimethylallyl)adenosine (i(6)A). In Shewanella denitrificans (strain OS217 / ATCC BAA-1090 / DSM 15013), this protein is tRNA dimethylallyltransferase.